The chain runs to 320 residues: Malate dehydrogenase 2 (320 aa).

Residues 10 to 15 and aspartate 34 each bind NAD(+); that span reads GAGQIG. 2 residues coordinate substrate: arginine 83 and arginine 89. NAD(+) is bound by residues asparagine 96 and 119–121; that span reads ITN. Positions 121 and 152 each coordinate substrate. Histidine 176 functions as the Proton acceptor in the catalytic mechanism.

This sequence belongs to the LDH/MDH superfamily. MDH type 3 family.

The catalysed reaction is (S)-malate + NAD(+) = oxaloacetate + NADH + H(+). Catalyzes the reversible oxidation of malate to oxaloacetate. This chain is Malate dehydrogenase 2, found in Rhodopseudomonas palustris (strain BisB18).